The sequence spans 253 residues: Type III pantothenate kinase (253 aa).

Residue 6-13 (DVGNTNTV) participates in ATP binding. 103-106 (GADR) contributes to the substrate binding site. Asp105 serves as the catalytic Proton acceptor. Asp125 contacts K(+). Thr128 provides a ligand contact to ATP. A substrate-binding site is contributed by Thr180.

It belongs to the type III pantothenate kinase family. As to quaternary structure, homodimer. It depends on NH4(+) as a cofactor. The cofactor is K(+).

The protein localises to the cytoplasm. It carries out the reaction (R)-pantothenate + ATP = (R)-4'-phosphopantothenate + ADP + H(+). The protein operates within cofactor biosynthesis; coenzyme A biosynthesis; CoA from (R)-pantothenate: step 1/5. In terms of biological role, catalyzes the phosphorylation of pantothenate (Pan), the first step in CoA biosynthesis. The chain is Type III pantothenate kinase from Parafrankia sp. (strain EAN1pec).